The primary structure comprises 350 residues: Probable choline kinase 2 (350 aa).

The ATP site is built by Arg-73, Gln-210, and Asp-227.

It belongs to the choline/ethanolamine kinase family.

The catalysed reaction is choline + ATP = phosphocholine + ADP + H(+). It functions in the pathway phospholipid metabolism; phosphatidylcholine biosynthesis; phosphocholine from choline: step 1/1. Involved in phospholipid biosynthesis. Catalyzes the first step in phosphatidylcholine biosynthesis. The polypeptide is Probable choline kinase 2 (Arabidopsis thaliana (Mouse-ear cress)).